A 175-amino-acid polypeptide reads, in one-letter code: Translation initiation factor IF-3 (175 aa).

Belongs to the IF-3 family. In terms of assembly, monomer.

The protein localises to the cytoplasm. Functionally, IF-3 binds to the 30S ribosomal subunit and shifts the equilibrium between 70S ribosomes and their 50S and 30S subunits in favor of the free subunits, thus enhancing the availability of 30S subunits on which protein synthesis initiation begins. This chain is Translation initiation factor IF-3, found in Staphylococcus aureus (strain USA300).